Consider the following 372-residue polypeptide: Delta-type opioid receptor (372 aa).

Residues 1–47 lie on the Extracellular side of the membrane; it reads MEPAPSAGAELQPPLFANASDAYPSACPSAGANASGPPGARSASSLA. Residues Asn-18 and Asn-33 are each glycosylated (N-linked (GlcNAc...) asparagine). Residues 48–75 traverse the membrane as a helical segment; that stretch reads LAIAITALYSAVCAVGLLGNVLVMFGIV. Residues 76–85 are Cytoplasmic-facing; sequence RYTKMKTATN. A helical membrane pass occupies residues 86-110; it reads IYIFNLALADALATSTLPFQSAKYL. The Extracellular portion of the chain corresponds to 111 to 122; it reads METWPFGELLCK. Cysteines 121 and 198 form a disulfide. A helical transmembrane segment spans residues 123-144; it reads AVLSIDYYNMFTSIFTLTMMSV. The Cytoplasmic portion of the chain corresponds to 145 to 163; that stretch reads DRYIAVCHPVKALDFRTPA. A helical membrane pass occupies residues 164 to 186; it reads KAKLINICIWVLASGVGVPIMVM. Residues 187–206 are Extracellular-facing; that stretch reads AVTRPRDGAVVCMLQFPSPS. The chain crosses the membrane as a helical span at residues 207 to 238; sequence WYWDTVTKICVFLFAFVVPILIITVCYGLMLL. Over 239-261 the chain is Cytoplasmic; it reads RLRSVRLLSGSKEKDRSLRRITR. The chain crosses the membrane as a helical span at residues 262 to 284; it reads MVLVVVGAFVVCWAPIHIFVIVW. Residues 285–299 lie on the Extracellular side of the membrane; that stretch reads TLVDIDRRDPLVVAA. Residues 300–321 traverse the membrane as a helical segment; the sequence is LHLCIALGYANSSLNPVLYAFL. Residues 322 to 372 are Cytoplasmic-facing; it reads DENFKRCFRQLCRKPCGRPDPSSFSRAREATARERVTACTPSDGPGGGAAA. A lipid anchor (S-palmitoyl cysteine) is attached at Cys-333. The interval 340-372 is disordered; it reads PDPSSFSRAREATARERVTACTPSDGPGGGAAA. Over residues 347 to 357 the composition is skewed to basic and acidic residues; the sequence is RAREATARERV.

It belongs to the G-protein coupled receptor 1 family. In terms of assembly, may form homooligomers. Forms a heterodimer with OPRM1. Interacts with GPRASP1. Interacts with RTP4; the interaction promotes cell surface localization of the OPRD1-OPRM1 heterodimer. In terms of processing, N-glycosylated. Post-translationally, ubiquitinated. A basal ubiquitination seems not to be related to degradation. Ubiquitination is increased upon formation of OPRM1:OPRD1 oligomers leading to proteasomal degradation; the ubiquitination is diminished by RTP4. As to expression, detected in oocytes (at protein level). Detected in brain cortex, hypothalamus, hippocampus and olfactory bulb. Detected in oocytes.

Its subcellular location is the cell membrane. Functionally, G-protein coupled receptor that functions as a receptor for endogenous enkephalins and for a subset of other opioids. Ligand binding causes a conformation change that triggers signaling via guanine nucleotide-binding proteins (G proteins) and modulates the activity of down-stream effectors, such as adenylate cyclase. Signaling leads to the inhibition of adenylate cyclase activity. Inhibits neurotransmitter release by reducing calcium ion currents and increasing potassium ion conductance. Plays a role in the perception of pain and in opiate-mediated analgesia. Plays a role in developing analgesic tolerance to morphine. The protein is Delta-type opioid receptor (OPRD1) of Homo sapiens (Human).